Reading from the N-terminus, the 512-residue chain is tRNA-guanine(15) transglycosylase (512 aa).

The active-site Nucleophile is the D85. Residue D120 participates in substrate binding. Zn(2+)-binding residues include C272, C274, and C277.

This sequence belongs to the archaeosine tRNA-ribosyltransferase family. Requires Zn(2+) as cofactor.

The enzyme catalyses guanosine(15) in tRNA + 7-cyano-7-deazaguanine = 7-cyano-7-carbaguanosine(15) in tRNA + guanine. The protein operates within tRNA modification; archaeosine-tRNA biosynthesis. Exchanges the guanine residue with 7-cyano-7-deazaguanine (preQ0) at position 15 in the dihydrouridine loop (D-loop) of archaeal tRNAs. This Aeropyrum pernix (strain ATCC 700893 / DSM 11879 / JCM 9820 / NBRC 100138 / K1) protein is tRNA-guanine(15) transglycosylase.